Here is a 234-residue protein sequence, read N- to C-terminus: Zinc finger FYVE domain-containing protein 21 (234 aa).

An FYVE-type zinc finger spans residues 44-104; sequence DKECPRCMQC…QCADCALVSH (61 aa). Residues cysteine 50, cysteine 53, cysteine 66, cysteine 69, cysteine 74, cysteine 77, cysteine 96, and cysteine 99 each contribute to the Zn(2+) site. The PH-like stretch occupies residues 107–234; that stretch reads AEFYDKQLKV…TKLLYESRDQ (128 aa).

As to quaternary structure, interacts with PTK2/FAK1.

Its subcellular location is the cell junction. The protein localises to the focal adhesion. It localises to the cytoplasmic vesicle. The protein resides in the endosome. Its function is as follows. Plays a role in cell adhesion, and thereby in cell motility which requires repeated formation and disassembly of focal adhesions. Regulates microtubule-induced PTK2/FAK1 dephosphorylation, an event important for focal adhesion disassembly, as well as integrin beta-1/ITGB1 cell surface expression. The polypeptide is Zinc finger FYVE domain-containing protein 21 (Zfyve21) (Rattus norvegicus (Rat)).